A 299-amino-acid chain; its full sequence is Tetrahydromethanopterin S-methyltransferase subunit E (299 aa).

6 consecutive transmembrane segments (helical) span residues 57 to 79 (AISG…AWAL), 89 to 111 (AIIV…AFLG), 132 to 154 (HIGP…AYLA), 164 to 183 (LPLV…SSTG), 227 to 246 (FCSR…IIFL), and 261 to 283 (LVTK…AVIN).

It belongs to the MtrE family. In terms of assembly, the complex is composed of 8 subunits; MtrA, MtrB, MtrC, MtrD, MtrE, MtrF, MtrG and MtrH.

The protein localises to the cell membrane. The catalysed reaction is 5-methyl-5,6,7,8-tetrahydromethanopterin + coenzyme M + 2 Na(+)(in) = 5,6,7,8-tetrahydromethanopterin + methyl-coenzyme M + 2 Na(+)(out). The protein operates within one-carbon metabolism; methanogenesis from CO(2); methyl-coenzyme M from 5,10-methylene-5,6,7,8-tetrahydromethanopterin: step 2/2. Part of a complex that catalyzes the formation of methyl-coenzyme M and tetrahydromethanopterin from coenzyme M and methyl-tetrahydromethanopterin. This is an energy-conserving, sodium-ion translocating step. The sequence is that of Tetrahydromethanopterin S-methyltransferase subunit E from Methanococcus maripaludis (strain DSM 14266 / JCM 13030 / NBRC 101832 / S2 / LL).